The primary structure comprises 418 residues: Glutamyl-tRNA(Gln) amidotransferase subunit D (418 aa).

The Asparaginase/glutaminase domain occupies 74-405 (KNISILSTGG…KEAKELMSKN (332 aa)). Residues Thr-84, Thr-160, Asp-161, and Lys-237 contribute to the active site.

This sequence belongs to the asparaginase 1 family. GatD subfamily. In terms of assembly, heterodimer of GatD and GatE.

It carries out the reaction L-glutamyl-tRNA(Gln) + L-glutamine + ATP + H2O = L-glutaminyl-tRNA(Gln) + L-glutamate + ADP + phosphate + H(+). Its function is as follows. Allows the formation of correctly charged Gln-tRNA(Gln) through the transamidation of misacylated Glu-tRNA(Gln) in organisms which lack glutaminyl-tRNA synthetase. The reaction takes place in the presence of glutamine and ATP through an activated gamma-phospho-Glu-tRNA(Gln). The GatDE system is specific for glutamate and does not act on aspartate. The sequence is that of Glutamyl-tRNA(Gln) amidotransferase subunit D from Methanococcus maripaludis (strain DSM 14266 / JCM 13030 / NBRC 101832 / S2 / LL).